The chain runs to 596 residues: Polyphenol oxidase B, chloroplastic (596 aa).

The interval Met1–Ser23 is disordered. A chloroplast-targeting transit peptide spans Met1–Ala87. Low complexity predominate over residues Ser8 to Ser23. Cystine bridges form between Cys98–Cys114 and Cys113–Cys182. Positions 181, 199, 208, 329, 333, and 371 each coordinate Cu cation. Residues Cys185–His199 constitute a cross-link (2'-(S-cysteinyl)-histidine (Cys-His)).

This sequence belongs to the tyrosinase family. Cu(2+) is required as a cofactor.

It is found in the plastid. Its subcellular location is the chloroplast thylakoid lumen. The catalysed reaction is 2 catechol + O2 = 2 1,2-benzoquinone + 2 H2O. Its function is as follows. Catalyzes the oxidation of mono- and o-diphenols to o-diquinones. This is Polyphenol oxidase B, chloroplastic from Solanum lycopersicum (Tomato).